The primary structure comprises 488 residues: MTKTERYLQLRSMIPEMRRIKRIHFVGIGGAGMGGIAEVLVNEGYVVSGSDIAQNAVTDRLCLLGAKIHIGHGADNVQQADVVVVSTAINPQNPEIIAAKELRIPIVRRAEMLAELMRYRHGVAIAGTHGKTTTTSLIASLYGQAGRDPTFVIGGLLNSAGTNARLGTSRYLIAEADESDASFLHLQPMVSVVTNIEADHMDTYGGDFEKLKSTFVDFLHNLPFYGVAVVCIDDPVVREIMPRISRHIVTYGFRDDADVQALNFSQQGHQCRFTVRRKGKEDLDLLLNLPGQHNVLNALAAIAVATEDEIDDSAIIQALAEFQGIGRRFQHLGKFATPKGEVMLVDDYGHHPSEVAATIKAARAGWPEKRLVMAYQPHRYTRTRDLYEDFIEVLSQVDCLLLLDVYSAGEAPIPGADGRALCRSIRLRGQLDPIFIASPEQLAEVLPDVLQEGDLLLTQGAGNIGALSRKLAASELGFSTGATTEVKP.

An ATP-binding site is contributed by 127–133; the sequence is GTHGKTT.

Belongs to the MurCDEF family.

The protein localises to the cytoplasm. It catalyses the reaction UDP-N-acetyl-alpha-D-muramate + L-alanine + ATP = UDP-N-acetyl-alpha-D-muramoyl-L-alanine + ADP + phosphate + H(+). It functions in the pathway cell wall biogenesis; peptidoglycan biosynthesis. Functionally, cell wall formation. In Shewanella oneidensis (strain ATCC 700550 / JCM 31522 / CIP 106686 / LMG 19005 / NCIMB 14063 / MR-1), this protein is UDP-N-acetylmuramate--L-alanine ligase.